The primary structure comprises 87 residues: Kappa-6-bungarotoxin (87 aa).

The N-terminal stretch at 1–21 (MKTLLLSLVVVTIVCLDLGYT) is a signal peptide. Cystine bridges form between cysteine 24–cysteine 42, cysteine 35–cysteine 63, cysteine 48–cysteine 52, cysteine 67–cysteine 79, and cysteine 80–cysteine 85.

The protein belongs to the three-finger toxin family. Long-chain subfamily. Kappa-neurotoxin sub-subfamily. Homo- and heterodimer; non-covalently linked. In terms of tissue distribution, expressed by the venom gland.

It localises to the secreted. Postsynaptic neurotoxin that binds and inhibits neuronal nicotinic acetylcholine receptors (nAChR) with high affinity (IC(50)&lt;100 nM). Is a selective, and slowly reversible antagonist of alpha-3/CHRNA3-containing and some alpha-4/CHRNA4-containing AChRs. The protein is Kappa-6-bungarotoxin of Bungarus multicinctus (Many-banded krait).